The following is a 100-amino-acid chain: Putative pterin-4-alpha-carbinolamine dehydratase (100 aa).

It belongs to the pterin-4-alpha-carbinolamine dehydratase family.

The catalysed reaction is (4aS,6R)-4a-hydroxy-L-erythro-5,6,7,8-tetrahydrobiopterin = (6R)-L-erythro-6,7-dihydrobiopterin + H2O. The chain is Putative pterin-4-alpha-carbinolamine dehydratase from Bradyrhizobium sp. (strain ORS 278).